Consider the following 1029-residue polypeptide: FYVE, RhoGEF and PH domain-containing protein tag-77 (1029 aa).

Composition is skewed to basic and acidic residues over residues 1–12 (MKYDMNHRKNSD) and 20–39 (TVKE…DNRF). Disordered regions lie at residues 1–155 (MKYD…ATSE), 185–254 (VPRM…ERKT), and 279–370 (NNGV…EKDD). A compositionally biased stretch (pro residues) spans 42–56 (QPPPPPSPRRAPPPP). Low complexity-rich tracts occupy residues 76–85 (PPSSSESSEN) and 122–133 (SSSTSDVSSQNS). Polar residues-rich tracts occupy residues 141–155 (SCTT…ATSE) and 200–211 (PISQVSTLSQVS). Over residues 212-227 (DEFDEGDTSASDEESM) the composition is skewed to acidic residues. Over residues 316–334 (SPTSGMSSSSTDDFSRITS) the composition is skewed to low complexity. Residues 335–347 (MTSDRSSILTSHS) show a composition bias toward polar residues. In terms of domain architecture, DH spans 375-572 (KLHYAAVEFL…ENVTQAVNQK (198 aa)). Residues 593 to 696 (NVLEPGRVLI…WTDDLTKAQY (104 aa)) form the PH domain. Zn(2+) is bound by residues cysteine 810, cysteine 823, cysteine 826, cysteine 831, cysteine 834, cysteine 851, and cysteine 854. The FYVE-type; degenerate zinc finger occupies 810–859 (CSTEFNIINRRHHCRDCGWLICKFCKGQAPLSKYDFTKQNVCSECFDRHY).

It is found in the cytoplasm. It localises to the cytoskeleton. Functionally, activates cdc-42, a member of the Ras-like family of Rho- and Rac proteins, by exchanging bound GDP for free GTP. May play a role in regulating the actin cytoskeleton and cell shape. Required for normal lifespan. The sequence is that of FYVE, RhoGEF and PH domain-containing protein tag-77 from Caenorhabditis elegans.